A 228-amino-acid chain; its full sequence is MQLSVTHPCCRTLILLLVSNLLLWESEAVLPICSVRNGRCFGSFEELLERAVSLSEEISKKAFELFTAFDSQYAQSHQLIVKSLKKCHTSSLDLPKPGSQAMQTHPVTLLKLASKLLRAWQVPLNHLVNNLPSLKNVSPSILSKAKEIEEKSNGLLEGVKSILIQMQNGDTEDENYPGWSGLASLKSETEDIRLFAYYNMIRCEGRDTQKVETALKMVKCKISNENNC.

Residues 1-28 (MQLSVTHPCCRTLILLLVSNLLLWESEA) form the signal peptide. Intrachain disulfides connect Cys87–Cys203 and Cys220–Cys228.

The protein belongs to the somatotropin/prolactin family. In terms of tissue distribution, expressed specifically in the placenta. Expression restricted to the junctional zone of the chorioallantoic placenta.

The protein localises to the secreted. The protein is Prolactin-2A1 (Prl2a1) of Mus musculus (Mouse).